Reading from the N-terminus, the 292-residue chain is Ribosomal protein L11 methyltransferase (292 aa).

4 residues coordinate S-adenosyl-L-methionine: Thr-145, Gly-166, Asp-188, and Asn-229.

Belongs to the methyltransferase superfamily. PrmA family.

The protein localises to the cytoplasm. The catalysed reaction is L-lysyl-[protein] + 3 S-adenosyl-L-methionine = N(6),N(6),N(6)-trimethyl-L-lysyl-[protein] + 3 S-adenosyl-L-homocysteine + 3 H(+). Functionally, methylates ribosomal protein L11. The chain is Ribosomal protein L11 methyltransferase from Pseudoalteromonas atlantica (strain T6c / ATCC BAA-1087).